Consider the following 469-residue polypeptide: Peripherin (469 aa).

Low complexity-rich tracts occupy residues 1–18 (MSHPSGLRSSVSSTSYRR) and 27–53 (SPGAFSYSSSSRFSSSRLLGSASPGSS). A disordered region spans residues 1 to 60 (MSHPSGLRSSVSSTSYRRTFGPPPSLSPGAFSYSSSSRFSSSRLLGSASPGSSVRLGSFR). The tract at residues 1-98 (MSHPSGLRSS…FLATRSNEKQ (98 aa)) is head. Tyrosine 16 carries the 3'-nitrotyrosine modification. Residues serine 27, serine 49, and serine 58 each carry the phosphoserine modification. An IF rod domain is found at 96-406 (EKQELQELND…KLLEGEESRI (311 aa)). The tract at residues 99 to 131 (ELQELNDRFANFIEKVRFLEQQNAALRGELNQA) is coil 1A. The linker 1 stretch occupies residues 132 to 142 (RGQEPARADQL). Residues 143 to 238 (CQQELRELRR…KLHEEELRDL (96 aa)) form a coil 1B region. Residues 239 to 261 (QLSVESQQVQHVEVEATVKPELT) form a linker 2 region. Residues 262–404 (AALRDIRAQY…YRKLLEGEES (143 aa)) form a coil 2 region. 3'-nitrotyrosine is present on tyrosine 378. Positions 405–469 (RISVPVHSFA…SELDKSPQSY (65 aa)) are tail. The disordered stretch occupies residues 447–469 (GEQVVTESQKEQHSELDKSPQSY). Tyrosine 469 is subject to Phosphotyrosine.

Belongs to the intermediate filament family. In terms of assembly, forms homodimers (in vitro). Homopolymerizes into a filamentous network (in vitro). Forms heterodimers with NEFL, NEFM or NEFH (in vitro). Interacts with DST (via C-terminus). Interacts with RAB7A; the interaction is direct. Interacts with PRKCE (via phorbol-ester/DAG-type 2 domain). Post-translationally, phosphorylated; phosphorylation increases after nerve injury in regenerating neurons.

It localises to the cytoplasm. Its subcellular location is the cytoskeleton. It is found in the cell projection. The protein localises to the axon. The protein resides in the perikaryon. Class-III neuronal intermediate filament protein. May form an independent structural network without the involvement of other neurofilaments or may cooperate with the neuronal intermediate filament proteins NEFL, NEFH, NEFM and INA to form a filamentous network. Assembly of the neuronal intermediate filaments may be regulated by RAB7A. Plays a role in the development of unmyelinated sensory neurons. May be involved in axon elongation and axon regeneration after injury. Inhibits neurite extension in type II spiral ganglion neurons in the cochlea. The sequence is that of Peripherin (PRPH) from Bos taurus (Bovine).